The primary structure comprises 658 residues: MKDKFELVSKYSPQGDQPRAIEQLVAGLKKGLKHQTLLGATGTGKTFTVSNVIQEVNKPTLVMAHNKTLAGQLYSEFKEFFPNNAVEYFVSYYDYYQPEAYVPQSDTYIEKDASINDEIDKLRHSATAALFERRDVIIIASVSCIYGLGSPIEYGEMLVSLRVGMEISRDQLLRKLVDIQYDRNDIDFQRGRFRVRGDVVEIFPASRDEHCMRIEFFGDEIERIREVDALTGEIIGEREHVSIFPASHFVTRPDIMKKAIVNIKAELEDRLKVLRADNKLLEAQRLEQRTNYDLEMMEEMGYCSGIENYSRHLSLRPAGVTPYTLLDYFPDDFQMVIDESHVTMPQIRGMFNGDQARKQMLVDHGFRLPSALDNRPLRLEEFEKHINQIMFISATPGPYELEKNPDVIEQIIRPTGLLDPIVEIRPIQGQIDDLMDEINDRVEKNERVLITTLTKKMSEDLTNYLKEAGVKVQYLHSEVKTLERIEIIRDLRLGVYDVIVGINLLREGIDLPEVSLVAILDADKEGFLRSERSLIQTMGRAARNENGRVIMYADKMTDSMRNSIGETERRRKIQIEYNEKHGITPKTIKKEIRGIIAATSAADEREAVKQHDLSKMSKKERDVFIEGMEHEMKEAAKALDFERAAELRDALLEIKAEG.

The 389-residue stretch at 26–414 (AGLKKGLKHQ…PDVIEQIIRP (389 aa)) folds into the Helicase ATP-binding domain. 39–46 (GATGTGKT) contacts ATP. Positions 92–115 (YYDYYQPEAYVPQSDTYIEKDASI) match the Beta-hairpin motif. Residues 430–592 (QIDDLMDEIN…ITPKTIKKEI (163 aa)) enclose the Helicase C-terminal domain. In terms of domain architecture, UVR spans 622–658 (DVFIEGMEHEMKEAAKALDFERAAELRDALLEIKAEG).

This sequence belongs to the UvrB family. Forms a heterotetramer with UvrA during the search for lesions. Interacts with UvrC in an incision complex.

The protein localises to the cytoplasm. The UvrABC repair system catalyzes the recognition and processing of DNA lesions. A damage recognition complex composed of 2 UvrA and 2 UvrB subunits scans DNA for abnormalities. Upon binding of the UvrA(2)B(2) complex to a putative damaged site, the DNA wraps around one UvrB monomer. DNA wrap is dependent on ATP binding by UvrB and probably causes local melting of the DNA helix, facilitating insertion of UvrB beta-hairpin between the DNA strands. Then UvrB probes one DNA strand for the presence of a lesion. If a lesion is found the UvrA subunits dissociate and the UvrB-DNA preincision complex is formed. This complex is subsequently bound by UvrC and the second UvrB is released. If no lesion is found, the DNA wraps around the other UvrB subunit that will check the other stand for damage. The polypeptide is UvrABC system protein B (Listeria monocytogenes serovar 1/2a (strain ATCC BAA-679 / EGD-e)).